Reading from the N-terminus, the 203-residue chain is LexA repressor (203 aa).

Residues 32 to 52 constitute a DNA-binding region (H-T-H motif); it reads RAEICTAFGFRSPNAAETHLR. Active-site for autocatalytic cleavage activity residues include Ser121 and Lys158.

Belongs to the peptidase S24 family. As to quaternary structure, homodimer.

It carries out the reaction Hydrolysis of Ala-|-Gly bond in repressor LexA.. Its function is as follows. Represses a number of genes involved in the response to DNA damage (SOS response), including recA and lexA. In the presence of single-stranded DNA, RecA interacts with LexA causing an autocatalytic cleavage which disrupts the DNA-binding part of LexA, leading to derepression of the SOS regulon and eventually DNA repair. This is LexA repressor from Aromatoleum aromaticum (strain DSM 19018 / LMG 30748 / EbN1) (Azoarcus sp. (strain EbN1)).